Consider the following 670-residue polypeptide: uncharacterized protein (670 aa).

A run of 10 helical transmembrane segments spans residues 23–42 (YALR…YYLN), 47–69 (YWAM…SKSL), 76–98 (LLGA…FFLL), 118–140 (VAYA…VNIT), 153–170 (VCEV…MMIL), 381–403 (QWDA…SAVA), 410–432 (SLLM…GLMV), 437–454 (LWQF…MQLL), 461–483 (FAAL…NPPV), and 493–510 (NLAK…FAIL).

It belongs to the aromatic acid exporter ArAE (TC 2.A.85) family.

The protein resides in the cell membrane. This is an uncharacterized protein from Escherichia coli O157:H7.